The primary structure comprises 318 residues: 1-aminocyclopropane-1-carboxylate oxidase (318 aa).

In terms of domain architecture, Fe2OG dioxygenase spans 151 to 251 (PTFGTKVSNY…RMSIASFYNP (101 aa)). Residues His-175, Asp-177, and His-232 each coordinate Fe cation.

The protein belongs to the iron/ascorbate-dependent oxidoreductase family. Fe cation is required as a cofactor.

The enzyme catalyses 1-aminocyclopropane-1-carboxylate + L-ascorbate + O2 = ethene + L-dehydroascorbate + hydrogen cyanide + CO2 + 2 H2O. It functions in the pathway alkene biosynthesis; ethylene biosynthesis via S-adenosyl-L-methionine; ethylene from S-adenosyl-L-methionine: step 2/2. The sequence is that of 1-aminocyclopropane-1-carboxylate oxidase (ACO) from Dendrobium crumenatum (Tropical pigeon orchid).